The primary structure comprises 328 residues: uncharacterized protein (328 aa).

The interval Ala296–Gly328 is disordered. A compositionally biased stretch (acidic residues) spans Gly299–Pro310.

Its function is as follows. Possibly necessary for replication. This is an uncharacterized protein from Halobacterium sp. (strain GN101).